We begin with the raw amino-acid sequence, 194 residues long: Small ribosomal subunit protein uS4 (194 aa).

Position 66 is an N6-acetyllysine (Lys66). Residue Lys93 forms a Glycyl lysine isopeptide (Lys-Gly) (interchain with G-Cter in SUMO2) linkage. One can recognise an S4 RNA-binding domain in the interval 108 to 182; it reads RRLQTQVFKL…VKRKNAKKGQ (75 aa). Lys116 is subject to N6-acetyllysine. Lys139 participates in a covalent cross-link: Glycyl lysine isopeptide (Lys-Gly) (interchain with G-Cter in SUMO2). The residue at position 153 (Ser153) is a Phosphoserine. Lys155 bears the N6-acetyllysine mark. Residues 162-194 are disordered; it reads RSPYGGGRPGRVKRKNAKKGQGGAGAGDDEEED. The residue at position 163 (Ser163) is a Phosphoserine.

Belongs to the universal ribosomal protein uS4 family. In terms of assembly, component of the small ribosomal subunit. Part of the small subunit (SSU) processome, composed of more than 70 proteins and the RNA chaperone small nucleolar RNA (snoRNA) U3.

Its subcellular location is the cytoplasm. The protein resides in the nucleus. It is found in the nucleolus. Functionally, component of the small ribosomal subunit. The ribosome is a large ribonucleoprotein complex responsible for the synthesis of proteins in the cell. Part of the small subunit (SSU) processome, first precursor of the small eukaryotic ribosomal subunit. During the assembly of the SSU processome in the nucleolus, many ribosome biogenesis factors, an RNA chaperone and ribosomal proteins associate with the nascent pre-rRNA and work in concert to generate RNA folding, modifications, rearrangements and cleavage as well as targeted degradation of pre-ribosomal RNA by the RNA exosome. This chain is Small ribosomal subunit protein uS4 (RPS9), found in Papio anubis (Olive baboon).